The following is a 287-amino-acid chain: Thioredoxin-related transmembrane protein 2 (287 aa).

The signal sequence occupies residues Met1 to Ala13. Topologically, residues Ala14 to Met112 are extracellular. The helical transmembrane segment at Gly113–Leu133 threads the bilayer. At Gly134 to Gln287 the chain is on the cytoplasmic side. Positions His137–Ser209 constitute a Thioredoxin domain. The short motif at Lys284 to Gln287 is the Di-lysine motif element.

Monomer. Homodimer; disulfide-linked. Occurs in both reduced and oxidized monomeric form. Oxidative conditions increase homodimerization.

The protein resides in the endoplasmic reticulum membrane. Its subcellular location is the mitochondrion membrane. Functionally, endoplasmic reticulum and mitochondria-associated protein that probably functions as a regulator of cellular redox state and thereby regulates protein post-translational modification, protein folding and mitochondrial activity. In Xenopus laevis (African clawed frog), this protein is Thioredoxin-related transmembrane protein 2 (tmx2).